Consider the following 523-residue polypeptide: Lysine--tRNA ligase (523 aa).

The short motif at 30–38 is the 'HIGH' region element; sequence PSGYVHVGN. Aspartate 95, cysteine 99, histidine 100, histidine 106, cysteine 177, histidine 180, cysteine 199, and histidine 203 together coordinate Zn(2+). The 'KMSKS' region motif lies at 279-283; sequence KMSGS.

This sequence belongs to the class-I aminoacyl-tRNA synthetase family. Zn(2+) is required as a cofactor.

The protein localises to the cytoplasm. The enzyme catalyses tRNA(Lys) + L-lysine + ATP = L-lysyl-tRNA(Lys) + AMP + diphosphate. The polypeptide is Lysine--tRNA ligase (lysS) (Pyrococcus furiosus (strain ATCC 43587 / DSM 3638 / JCM 8422 / Vc1)).